The following is a 77-amino-acid chain: Translation initiation factor IF-1, chloroplastic (77 aa).

The S1-like domain maps to 1–71; that stretch reads MKEQKWIHEG…TRGRIIYRLR (71 aa).

This sequence belongs to the IF-1 family. As to quaternary structure, component of the 30S ribosomal translation pre-initiation complex which assembles on the 30S ribosome in the order IF-2 and IF-3, IF-1 and N-formylmethionyl-tRNA(fMet); mRNA recruitment can occur at any time during PIC assembly.

Its subcellular location is the plastid. It localises to the chloroplast. Its function is as follows. One of the essential components for the initiation of protein synthesis. Stabilizes the binding of IF-2 and IF-3 on the 30S subunit to which N-formylmethionyl-tRNA(fMet) subsequently binds. Helps modulate mRNA selection, yielding the 30S pre-initiation complex (PIC). Upon addition of the 50S ribosomal subunit IF-1, IF-2 and IF-3 are released leaving the mature 70S translation initiation complex. The sequence is that of Translation initiation factor IF-1, chloroplastic from Daucus carota (Wild carrot).